The following is a 215-amino-acid chain: MRKKVLITGFDPFDKETVNPSWEAAKRLNGFETEEAIITAEQIPTVFRSALDTLRQAIQKHQPDIVICVGQAGGRMQITPERVAINLADARIPDNEGHQPIDEEISPDGPAAYWTRLPVKRMTAKMKEHGIPAAVSYTAGTFVCNYLFYGLMDHISRTSPHIRGGFIHIPYIPQQTIDKTAPSLSLDTIVRALRIAAVTAAQYDEDVKSPGGTLH.

Residues glutamate 81, cysteine 144, and histidine 168 contribute to the active site.

The protein belongs to the peptidase C15 family. In terms of assembly, homotetramer.

Its subcellular location is the cytoplasm. It carries out the reaction Release of an N-terminal pyroglutamyl group from a polypeptide, the second amino acid generally not being Pro.. Its function is as follows. Removes 5-oxoproline from various penultimate amino acid residues except L-proline. In Bacillus subtilis (strain 168), this protein is Pyrrolidone-carboxylate peptidase (pcp).